A 354-amino-acid polypeptide reads, in one-letter code: Uroporphyrinogen decarboxylase (354 aa).

Residues arginine 27–arginine 31, phenylalanine 46, aspartate 77, tyrosine 153, threonine 208, and histidine 326 contribute to the substrate site.

It belongs to the uroporphyrinogen decarboxylase family. As to quaternary structure, homodimer.

Its subcellular location is the cytoplasm. It carries out the reaction uroporphyrinogen III + 4 H(+) = coproporphyrinogen III + 4 CO2. The protein operates within porphyrin-containing compound metabolism; protoporphyrin-IX biosynthesis; coproporphyrinogen-III from 5-aminolevulinate: step 4/4. In terms of biological role, catalyzes the decarboxylation of four acetate groups of uroporphyrinogen-III to yield coproporphyrinogen-III. This chain is Uroporphyrinogen decarboxylase, found in Neisseria meningitidis serogroup B (strain ATCC BAA-335 / MC58).